Consider the following 88-residue polypeptide: Kunitz-type U15-theraphotoxin-Hs1a (88 aa).

An N-terminal signal peptide occupies residues 1-27 (MGTARFLSAVLLLSVPLMVTFPALLSA). A propeptide spanning residues 28–33 (EYHDGR) is cleaved from the precursor. One can recognise a BPTI/Kunitz inhibitor domain in the interval 37–85 (CSLPSDSGDCLRFFEMWYFDGTTCTKFVYGGYGGNDNRFPTEKACMKRC). 2 disulfides stabilise this stretch: C37–C85 and C60–C81.

The protein belongs to the venom Kunitz-type family. 03 (sub-Kunitz) subfamily. As to expression, expressed by the venom gland.

Its subcellular location is the secreted. Functionally, serine protease inhibitor that inhibits trypsin at a molar ratio of 1:1. The sequence is that of Kunitz-type U15-theraphotoxin-Hs1a from Cyriopagopus schmidti (Chinese bird spider).